The following is a 198-amino-acid chain: Probable chemoreceptor glutamine deamidase CheD (198 aa).

The protein belongs to the CheD family.

The enzyme catalyses L-glutaminyl-[protein] + H2O = L-glutamyl-[protein] + NH4(+). Functionally, probably deamidates glutamine residues to glutamate on methyl-accepting chemotaxis receptors (MCPs), playing an important role in chemotaxis. This chain is Probable chemoreceptor glutamine deamidase CheD, found in Xanthomonas euvesicatoria pv. vesicatoria (strain 85-10) (Xanthomonas campestris pv. vesicatoria).